The primary structure comprises 335 residues: Partner of xrn-2 protein 1 (335 aa).

The XRN2-binding (XTBD) domain maps to 7 to 91 (VEAEKKLWES…SYVKASAAKK (85 aa)). Positions 95 to 119 (VKTSDLEGASDESKKVKMEKSPSPV) are disordered. Basic and acidic residues predominate over residues 105 to 114 (DESKKVKMEK).

As to quaternary structure, interacts (via N-terminus) with xrn-2; the interaction is direct.

It is found in the nucleus. The protein localises to the nucleolus. It localises to the nucleoplasm. Its function is as follows. Plays a role in maintenance of steady-state concentration and turnover of microRNAs (miRNA) by degradation of mature miRNA in complex with the exoribonuclease xrn-2. Stabilizes and enhances the accumulation and activity of the exoribonuclease xrn-2, and thus contributes to miRNA turnover. This is Partner of xrn-2 protein 1 from Caenorhabditis elegans.